The primary structure comprises 430 residues: Adenylosuccinate synthetase (430 aa).

GTP-binding positions include 12–18 (GDEGKGK) and 40–42 (GHT). The active-site Proton acceptor is the D13. Mg(2+) is bound by residues D13 and G40. Residues 13 to 16 (DEGK), 38 to 41 (NAGH), T130, R144, Q224, T239, and R303 contribute to the IMP site. H41 serves as the catalytic Proton donor. Position 299–305 (299–305 (TVTGRKR)) interacts with substrate. GTP contacts are provided by residues R305, 331 to 333 (KLD), and 413 to 415 (STS).

It belongs to the adenylosuccinate synthetase family. As to quaternary structure, homodimer. The cofactor is Mg(2+).

It localises to the cytoplasm. It carries out the reaction IMP + L-aspartate + GTP = N(6)-(1,2-dicarboxyethyl)-AMP + GDP + phosphate + 2 H(+). It functions in the pathway purine metabolism; AMP biosynthesis via de novo pathway; AMP from IMP: step 1/2. Functionally, plays an important role in the de novo pathway of purine nucleotide biosynthesis. Catalyzes the first committed step in the biosynthesis of AMP from IMP. The sequence is that of Adenylosuccinate synthetase from Paracoccus denitrificans (strain Pd 1222).